A 432-amino-acid polypeptide reads, in one-letter code: MAKNVVVIGAQWGDEGKGKIVDWLAEEAGGVVRFQGGHNAGHTLVVGGKKTILRLIPSGILHESLDCFIGSGVVVSPEALLGEIDELNAAGVKNVEGRLKIAPTCPLILPYHIALDQAREASRGKGKIGTTGRGIGPAYEDKVARRAIRAADLLHPEKLREKLDAVFAYYNVQLQHLHNAESVKAEDVMAVIEKVAPRITPMITDVSRVLNEKNKNGEKLLFEGAQGALLDIDYGTYPFVTSSNCLAGAASAGAGVGPQMLDYVLGIVKAYTTRVGSGPFPTELFDEVGAGLAERGHEFGSVTGRARRCGWFDAAALKRSIQINGISGMCITKLDVMDGVETINICVGYELPDGGKTDILPCGSDAVEACKPIYETMPGWSESTFGVKSYDALPANAKAYLKRIEEVCGAPVAIVSTGPDREETIVLHHPFA.

GTP is bound by residues 13-19 and 41-43; these read GDEGKGK and GHT. Catalysis depends on Asp-14, which acts as the Proton acceptor. Positions 14 and 41 each coordinate Mg(2+). IMP contacts are provided by residues 14 to 17, 39 to 42, Thr-131, Arg-145, Gln-226, Thr-241, and Arg-305; these read DEGK and NAGH. His-42 serves as the catalytic Proton donor. 301 to 307 contributes to the substrate binding site; sequence SVTGRAR. Residues Arg-307, 333–335, and 416–418 each bind GTP; these read KLD and STG.

The protein belongs to the adenylosuccinate synthetase family. In terms of assembly, homodimer. Mg(2+) serves as cofactor.

It localises to the cytoplasm. It carries out the reaction IMP + L-aspartate + GTP = N(6)-(1,2-dicarboxyethyl)-AMP + GDP + phosphate + 2 H(+). Its pathway is purine metabolism; AMP biosynthesis via de novo pathway; AMP from IMP: step 1/2. In terms of biological role, plays an important role in the de novo pathway of purine nucleotide biosynthesis. Catalyzes the first committed step in the biosynthesis of AMP from IMP. This Neisseria meningitidis serogroup A / serotype 4A (strain DSM 15465 / Z2491) protein is Adenylosuccinate synthetase.